Here is a 488-residue protein sequence, read N- to C-terminus: Probable cytosol aminopeptidase (488 aa).

Mn(2+) is bound by residues lysine 251 and aspartate 256. The active site involves lysine 263. Mn(2+)-binding residues include aspartate 274, aspartate 333, and glutamate 335. The active site involves arginine 337.

The protein belongs to the peptidase M17 family. Mn(2+) is required as a cofactor.

Its subcellular location is the cytoplasm. It catalyses the reaction Release of an N-terminal amino acid, Xaa-|-Yaa-, in which Xaa is preferably Leu, but may be other amino acids including Pro although not Arg or Lys, and Yaa may be Pro. Amino acid amides and methyl esters are also readily hydrolyzed, but rates on arylamides are exceedingly low.. The catalysed reaction is Release of an N-terminal amino acid, preferentially leucine, but not glutamic or aspartic acids.. In terms of biological role, presumably involved in the processing and regular turnover of intracellular proteins. Catalyzes the removal of unsubstituted N-terminal amino acids from various peptides. In Cenarchaeum symbiosum (strain A), this protein is Probable cytosol aminopeptidase.